Consider the following 497-residue polypeptide: Serine hydroxymethyltransferase (497 aa).

Residues Leu176 and 180–182 (GHL) contribute to the (6S)-5,6,7,8-tetrahydrofolate site. Residue Lys289 is modified to N6-(pyridoxal phosphate)lysine.

The protein belongs to the SHMT family. In terms of assembly, homodimer. Pyridoxal 5'-phosphate serves as cofactor.

The protein localises to the cytoplasm. The catalysed reaction is (6R)-5,10-methylene-5,6,7,8-tetrahydrofolate + glycine + H2O = (6S)-5,6,7,8-tetrahydrofolate + L-serine. Its pathway is one-carbon metabolism; tetrahydrofolate interconversion. It participates in amino-acid biosynthesis; glycine biosynthesis; glycine from L-serine: step 1/1. Catalyzes the reversible interconversion of serine and glycine with tetrahydrofolate (THF) serving as the one-carbon carrier. This reaction serves as the major source of one-carbon groups required for the biosynthesis of purines, thymidylate, methionine, and other important biomolecules. Also exhibits THF-independent aldolase activity toward beta-hydroxyamino acids, producing glycine and aldehydes, via a retro-aldol mechanism. The polypeptide is Serine hydroxymethyltransferase (Chlamydia trachomatis serovar L2b (strain UCH-1/proctitis)).